The primary structure comprises 54 residues: Hemoglobin subunit omega (54 aa).

Residues 2–54 (HWTAEEKQIILAIWAKIDIEEAGAAALSRLLVVYPWTQRYFKNFGNLSSPTAI) form the Globin domain.

This sequence belongs to the globin family.

In terms of biological role, hemoglobin omega chain is an embryonic-type beta-type chain found in prenatal and neonatal marsupials. The chain is Hemoglobin subunit omega from Notamacropus eugenii (Tammar wallaby).